The sequence spans 261 residues: tRNA pseudouridine synthase A (261 aa).

Residue aspartate 51 is the Nucleophile of the active site. Tyrosine 109 is a substrate binding site.

This sequence belongs to the tRNA pseudouridine synthase TruA family. Homodimer.

It carries out the reaction uridine(38/39/40) in tRNA = pseudouridine(38/39/40) in tRNA. Functionally, formation of pseudouridine at positions 38, 39 and 40 in the anticodon stem and loop of transfer RNAs. The chain is tRNA pseudouridine synthase A from Shewanella piezotolerans (strain WP3 / JCM 13877).